The primary structure comprises 234 residues: MPKTAKKHREALAKIDRSRTYPLVEGIESVKSVAYAKFDETVEVAVRLGVDPRHADQMVRGAVVLPNGLGKDVRVLVFAKGEKEKEARDAGADHVGAEDLVAKIQEGWFDFDTAIATPDMMGVVGKIGKLLGPRGLMPNPKVGTVTFDVGRAVKESKAGKVEFRVEKAGIVHAPVGKASFDADKLKENLLALVEALVKAKPSAAKGTYIKKISLSSTMGPGLNLDIADVQSKLV.

Belongs to the universal ribosomal protein uL1 family. Part of the 50S ribosomal subunit.

Binds directly to 23S rRNA. The L1 stalk is quite mobile in the ribosome, and is involved in E site tRNA release. Functionally, protein L1 is also a translational repressor protein, it controls the translation of the L11 operon by binding to its mRNA. The polypeptide is Large ribosomal subunit protein uL1 (Geobacter metallireducens (strain ATCC 53774 / DSM 7210 / GS-15)).